We begin with the raw amino-acid sequence, 327 residues long: D-alanine--D-alanine ligase (327 aa).

Residues 113–312 (KRLWMTYGLA…YEDFVMQVVA (200 aa)) form the ATP-grasp domain. Residue 139–194 (AADLGLPLIVKPAREGSSIGLTKVTAADQMRAAFEKAAALDNDVIAETFIDGAELT) participates in ATP binding. Residues Asp266, Glu279, and Asn281 each contribute to the Mg(2+) site.

This sequence belongs to the D-alanine--D-alanine ligase family. Requires Mg(2+) as cofactor. Mn(2+) serves as cofactor.

Its subcellular location is the cytoplasm. It carries out the reaction 2 D-alanine + ATP = D-alanyl-D-alanine + ADP + phosphate + H(+). It functions in the pathway cell wall biogenesis; peptidoglycan biosynthesis. Functionally, cell wall formation. In Cupriavidus necator (strain ATCC 17699 / DSM 428 / KCTC 22496 / NCIMB 10442 / H16 / Stanier 337) (Ralstonia eutropha), this protein is D-alanine--D-alanine ligase.